The chain runs to 636 residues: MWSVRLYPLALTLLFQCVSPAAARPSGCVDDVEVVQEIGSKEIQAPVVRFEISLTTQSIDAAGIGFREAIFINDAFIGPTLYAKQGDRIEFVVHNYMQQDTSIHFHGIDQRSTPWSDGVPGLTQSQIRPGASFLYNWTAHDAGTYFYHSHAKSQMMDGLYGAVVIAPDDEAPRPFHLISSGEADQAAMLAAEKLMRPIFVSDWSQYTSAEYHGIQHAANIDFSCMDSILVQGVGSQYCLSEEELDDMTNPIVLQLLKELAGGHMTPKGCIPPLQMFNGDFELHLENVPELAYNKCKGGQSSKGNYTIDVDTSIGWAALTFVNPGGLYPLQLSIDSHELYVYAVDGQYVYPIVADRVLVNTGSRISVMIKLDQEKARHVVRVANDYLNQILGGFAELAYDGATNAPKHPHPKTNYGGKLISSEMVSFVPEDSSPYPALRPAQSADSTFKLRLKKLGQPYRAYEWTQTGSLGYNISHEHDDPPLLLQNVEDVPATELTLKTQIGDWVDLVLVTAGPFAQAHPMHKHGNKVFLIGSGSGSFPWESVEEAIPHLPEGTFNFQDPPYLDTFNTVEMEGQANDTWTAVRYKAEYAGAWLFHCHVQTHLSGGMGMVVLDGVDAWPEVPLAYQEWNGFEPPALS.

The N-terminal stretch at 1-23 (MWSVRLYPLALTLLFQCVSPAAA) is a signal peptide. The region spanning 62 to 168 (AGIGFREAIF…LYGAVVIAPD (107 aa)) is the Plastocyanin-like 1 domain. Cu cation-binding residues include H104 and H106. N136 carries N-linked (GlcNAc...) asparagine glycosylation. Cu cation-binding residues include H148 and H150. Residue N304 is glycosylated (N-linked (GlcNAc...) asparagine). One can recognise a Plastocyanin-like 2 domain in the interval 318–381 (LTFVNPGGLY…QEKARHVVRV (64 aa)). An N-linked (GlcNAc...) asparagine glycan is attached at N472. Residues 486–613 (NVEDVPATEL…GGMGMVVLDG (128 aa)) form the Plastocyanin-like 3 domain. The Cu cation site is built by H519, H522, and H524. Residue N576 is glycosylated (N-linked (GlcNAc...) asparagine). 4 residues coordinate Cu cation: H595, C596, H597, and H601.

This sequence belongs to the multicopper oxidase family.

It participates in mycotoxin biosynthesis. Functionally, multicopper oxidase; part of the gene cluster that mediates the biosynthesis of cercosporin, a light-activated, non-host-selective toxin. The perylenequinone chromophore of cercosporin absorbs light energy to attain an electronically-activated triplet state and produces active oxygen species such as the hydroxyl radical, superoxide, hydrogen peroxide or singlet oxygen upon reaction with oxygen molecules. These reactive oxygen species cause damage to various cellular components including lipids, proteins and nucleic acids. The first step of cercosporin biosynthesis is performed by the polyketide synthase CTB1 which catalyzes the formation of nor-toralactone. The starter unit acyltransferase (SAT) domain of CTB1 initiates polyketide extension by the selective utilization of acetyl-CoA, which is elongated to the heptaketide in the beta-ketoacyl synthase (KS) domain by successive condensations with six malonyl units introduced by the malonyl acyltransferase (MAT) domain. The product template (PT) domain catalyzes C4-C9 and C2-C11 aldol cyclizations and dehydrations to a trihydroxynaphthalene, which is thought to be delivered to the thioesterase (TE) domain for product release. The bifunctional enzyme CTB3 then methylates nor-toralactone to toralactone before conducting an unusual oxidative aromatic ring opening. The O-methyltransferase CTB2 further methylates the nascent OH-6 of the CBT3 product, blocking further oxidation at this site before the reductase CTB6 reduces the 2-oxopropyl ketone at position C7, giving naphthalene. The FAD-dependent monooxygenase CTB5 in concert with the multicopper oxidase CTB12 are responsible for homodimerization of naphthalene with CTB7 installing the dioxepine moiety, finally producing cercosporin. The fasciclin domain-containing protein CTB11 might act with CTB5 and CTB12 whereas the roles of CTB9 and CTB10 have still to be elucidated. This chain is Multicopper oxidase CTB12, found in Cercospora beticola (Sugarbeet leaf spot fungus).